The sequence spans 247 residues: MVFKKTQPSPSLKNPERIQSFKKLSKKIGIKFSKIEYYNTAFIHSSYKNENPEILEDNERLEFLGDSVLGLVAARSLFQKYPKASEGELSRIKSKIVSTPILNSIAEKLNLGEYLLLGKGEKNSQGKGRRKIAANLFESLVGAIYLDRGFEVAEKFIVQHLLEFAENPDMEESVRDYKTQLQEYSQKHFKTLPVYRMKGESGPDHSKMFQVSVRIRDQWEASGYGASKKIAEQNAAKELYIRIRRGF.

Residues 21–149 (FKKLSKKIGI…LVGAIYLDRG (129 aa)) enclose the RNase III domain. Glu-62 contacts Mg(2+). The active site involves Asp-66. Asn-135 and Glu-138 together coordinate Mg(2+). Glu-138 is a catalytic residue. A DRBM domain is found at 176-245 (DYKTQLQEYS…AKELYIRIRR (70 aa)).

Belongs to the ribonuclease III family. Homodimer. Mg(2+) serves as cofactor.

Its subcellular location is the cytoplasm. The catalysed reaction is Endonucleolytic cleavage to 5'-phosphomonoester.. Digests double-stranded RNA. Involved in the processing of primary rRNA transcript to yield the immediate precursors to the large and small rRNAs (23S and 16S). Processes some mRNAs, and tRNAs when they are encoded in the rRNA operon. Processes pre-crRNA and tracrRNA of type II CRISPR loci if present in the organism. This Leptospira borgpetersenii serovar Hardjo-bovis (strain L550) protein is Ribonuclease 3.